The primary structure comprises 859 residues: Glucans biosynthesis glucosyltransferase H (859 aa).

Transmembrane regions (helical) follow at residues 144-166 (YILL…GILP), 200-222 (LLLF…MGFL), 523-545 (VMSY…LLAV), 573-595 (VALF…ILIW), 608-630 (VTVS…MLFH), and 684-706 (SFLW…SVIS).

The protein belongs to the glycosyltransferase 2 family. OpgH subfamily.

The protein resides in the cell inner membrane. Its pathway is glycan metabolism; osmoregulated periplasmic glucan (OPG) biosynthesis. Functionally, involved in the biosynthesis of osmoregulated periplasmic glucans (OPGs). The chain is Glucans biosynthesis glucosyltransferase H from Pseudomonas syringae pv. tomato (strain ATCC BAA-871 / DC3000).